The following is a 1238-amino-acid chain: uncharacterized protein (1238 aa).

Disordered regions lie at residues 1–38 (MSSK…DISS), 122–156 (SSTP…RPSF), 229–439 (PKNN…KNKE), 660–1016 (KNKL…TGAA), 1051–1083 (EEED…KLNS), and 1098–1191 (KKSG…NASR). 3 stretches are compositionally biased toward low complexity: residues 10-26 (NKNN…NNNN), 129-149 (LSPF…QSPL), and 234-276 (QIDS…TQSQ). Residues 317-343 (ELQNQTQINKSKQDLTNISQKINITTS) show a composition bias toward polar residues. A compositionally biased stretch (basic and acidic residues) spans 344–361 (QHDKDDLGEYRMSEKGGG). Residues 362-372 (DDGDDDDDYDN) show a composition bias toward acidic residues. The segment covering 383–394 (TNKKQQQQHHHK) has biased composition (basic residues). The segment covering 395–416 (GKEESQSEYYEKEKEKEKEDIA) has biased composition (basic and acidic residues). Composition is skewed to low complexity over residues 417–435 (TTRA…NNIN), 678–691 (QQQQ…QQQE), and 712–792 (QPSQ…QEKQ). Over residues 793-805 (QSQEKHQSQEKHQ) the composition is skewed to basic and acidic residues. 2 stretches are compositionally biased toward low complexity: residues 806–859 (SQQS…SQQK) and 882–906 (SQSQ…QSQR). The segment covering 916–927 (ENQDSENLDDTV) has biased composition (acidic residues). The segment covering 929 to 944 (MNYNQIPSTLDHSTLQ) has biased composition (polar residues). Over residues 966–975 (EIERRRRELA) the composition is skewed to basic and acidic residues. Acidic residues predominate over residues 976–990 (GEDSDEEFEILDEDQ). 2 stretches are compositionally biased toward low complexity: residues 1062-1083 (QNNN…KLNS) and 1108-1121 (SSSS…NKKN). The span at 1123-1133 (PQPTKSVNKPR) shows a compositional bias: polar residues. Over residues 1142–1181 (SQNRQKQSEQQQQQPQQQPQLPQQQQQQQQQQQLRQQQNE) the composition is skewed to low complexity. A compositionally biased stretch (polar residues) spans 1182–1191 (NTISSLNASR).

This is an uncharacterized protein from Dictyostelium discoideum (Social amoeba).